Reading from the N-terminus, the 539-residue chain is MQLTELSIKNQNVFVQHYIDGKEEMSSFFDYSIHHKDMWRERLEDLSSRFFAREELAAYLTSYHNKFGSSAMQSAIEKLKDPSSAAVVGGQQAGLLTGPLYTIHKIISIIVLAKQQEKELQVPVIPIFWVAGEDHDLDEINFVHTSEENGPVKKKLPQSYWKKSSAASTSLDQEKCAAWIDDVFAAFEETDHTNTLLDNVKRCLRESVTFTDFFELLIADLFQEEGLVLLNSGDPGIKKLETAMFQKILRENDELARAVSDQQAFMRQAGYKPIIESGKEQANLFYEYEDERFLIEKDNGRFVIKELDLGWTRDELHTHMEEHPERFSNNVVTRPLMQEFLIPTLAFIAGPGEINYWGELKQAFAVMGFKMPPVMPRLNITILERHIEKKLAERNISLQDAIERGTENQRETYFERQIPEEFTAVMDQAKSQIEAIHKTVRQEALKVDQSLEPLLLKNAAFIQDQLQFLERTVMKRIEEKEGYVLKDYERIQNSIKPLLAPQERIWNIMYYLNRYGPKFFTTFKNLPFSFQNQHQVVKL.

ADP is bound by residues Ser146 and 384-386 (ERH). Positions 455-475 (LLKNAAFIQDQLQFLERTVMK) form a coiled coil. Residues 490–493 (RIQN), Trp506, and Tyr510 each bind ADP.

Belongs to the BshC family. In terms of assembly, homodimer in solution.

Functionally, involved in bacillithiol (BSH) biosynthesis. May catalyze the last step of the pathway, the addition of cysteine to glucosamine malate (GlcN-Mal) to generate BSH. The sequence is that of Putative cysteine ligase BshC from Bacillus subtilis (strain 168).